A 363-amino-acid polypeptide reads, in one-letter code: Small ribosomal subunit biogenesis GTPase RsgA (363 aa).

Residues 112-268 enclose the CP-type G domain; it reads HQQVIAANID…LIDTPGMREL (157 aa). Residues 157–160 and 210–218 contribute to the GTP site; these read TKAD and GSSGAGKST. Positions 291, 296, 298, and 304 each coordinate Zn(2+). Residues 340–363 are disordered; it reads RVAQNNRGKGSGKRPASVDRPGRR.

This sequence belongs to the TRAFAC class YlqF/YawG GTPase family. RsgA subfamily. As to quaternary structure, monomer. Associates with 30S ribosomal subunit, binds 16S rRNA. Zn(2+) serves as cofactor.

Its subcellular location is the cytoplasm. Functionally, one of several proteins that assist in the late maturation steps of the functional core of the 30S ribosomal subunit. Helps release RbfA from mature subunits. May play a role in the assembly of ribosomal proteins into the subunit. Circularly permuted GTPase that catalyzes slow GTP hydrolysis, GTPase activity is stimulated by the 30S ribosomal subunit. In Xanthomonas euvesicatoria pv. vesicatoria (strain 85-10) (Xanthomonas campestris pv. vesicatoria), this protein is Small ribosomal subunit biogenesis GTPase RsgA.